Here is a 217-residue protein sequence, read N- to C-terminus: Octanoyltransferase (217 aa).

The 180-residue stretch at 35 to 214 folds into the BPL/LPL catalytic domain; the sequence is DEAGERIWLL…TLPAFLDKLR (180 aa). Substrate contacts are provided by residues 73 to 80, 145 to 147, and 158 to 160; these read RGGRYTYH, AIG, and GFS. Cysteine 176 (acyl-thioester intermediate) is an active-site residue.

It belongs to the LipB family.

The protein localises to the cytoplasm. The catalysed reaction is octanoyl-[ACP] + L-lysyl-[protein] = N(6)-octanoyl-L-lysyl-[protein] + holo-[ACP] + H(+). It functions in the pathway protein modification; protein lipoylation via endogenous pathway; protein N(6)-(lipoyl)lysine from octanoyl-[acyl-carrier-protein]: step 1/2. Functionally, catalyzes the transfer of endogenously produced octanoic acid from octanoyl-acyl-carrier-protein onto the lipoyl domains of lipoate-dependent enzymes. Lipoyl-ACP can also act as a substrate although octanoyl-ACP is likely to be the physiological substrate. This is Octanoyltransferase from Sphingopyxis alaskensis (strain DSM 13593 / LMG 18877 / RB2256) (Sphingomonas alaskensis).